We begin with the raw amino-acid sequence, 345 residues long: Anthranilate phosphoribosyltransferase (345 aa).

Residues Gly86, 89–90 (GD), Thr94, 96–99 (NIST), 114–122 (KHGGRGVSS), and Ser126 contribute to the 5-phospho-alpha-D-ribose 1-diphosphate site. Gly86 contacts anthranilate. Ser98 serves as a coordination point for Mg(2+). Arg172 is a binding site for anthranilate. Mg(2+) is bound by residues Asp231 and Glu232.

Belongs to the anthranilate phosphoribosyltransferase family. In terms of assembly, homodimer. The cofactor is Mg(2+).

It carries out the reaction N-(5-phospho-beta-D-ribosyl)anthranilate + diphosphate = 5-phospho-alpha-D-ribose 1-diphosphate + anthranilate. It functions in the pathway amino-acid biosynthesis; L-tryptophan biosynthesis; L-tryptophan from chorismate: step 2/5. In terms of biological role, catalyzes the transfer of the phosphoribosyl group of 5-phosphorylribose-1-pyrophosphate (PRPP) to anthranilate to yield N-(5'-phosphoribosyl)-anthranilate (PRA). This is Anthranilate phosphoribosyltransferase from Ralstonia pickettii (strain 12J).